Reading from the N-terminus, the 343-residue chain is F17e-G fimbrial adhesin (343 aa).

Positions 1–22 (MTNFYKVFLAVFILVCCNISHA) are cleaved as a signal peptide. A receptor-binding lectin domain region spans residues 23 to 199 (AVSFIGSTEN…LNPFTLNDTV (177 aa)). Residues 65–66 (AN), 110–111 (DT), and 138–141 (STQG) contribute to the a carbohydrate site. A disulfide bridge connects residues Cys-75 and Cys-132. Residues 200 to 343 (TSCRLLTPSA…GISTFTFSYQ (144 aa)) are fimbrillin-binding domain. The segment at 287 to 307 (LKFGPDSPVKGNENQWQLSTG) is disordered. Residues 298–307 (NENQWQLSTG) show a composition bias toward polar residues.

This sequence belongs to the fimbrial protein family.

It localises to the fimbrium. Functionally, essential fimbrial adhesion factor that mediates binding to N-acetylglucosamine-containing receptors in the host intestinal microvilli, leading to colonization of the intestinal tissue, and diarrhea or septicemia. Also confers adhesiveness to laminin and basement membranes. This Escherichia coli protein is F17e-G fimbrial adhesin (f17eG).